The following is an 88-amino-acid chain: uncharacterized protein (88 aa).

This is an uncharacterized protein from Archaeoglobus fulgidus (strain ATCC 49558 / DSM 4304 / JCM 9628 / NBRC 100126 / VC-16).